The primary structure comprises 236 residues: Flagellar L-ring protein (236 aa).

A signal peptide spans 1–16 (MRMQLTAVLAASLLAG). Residue Cys-17 is the site of N-palmitoyl cysteine attachment. Cys-17 is lipidated: S-diacylglycerol cysteine.

Belongs to the FlgH family. As to quaternary structure, the basal body constitutes a major portion of the flagellar organelle and consists of four rings (L,P,S, and M) mounted on a central rod.

The protein localises to the cell outer membrane. Its subcellular location is the bacterial flagellum basal body. Assembles around the rod to form the L-ring and probably protects the motor/basal body from shearing forces during rotation. The chain is Flagellar L-ring protein from Sinorhizobium fredii (strain NBRC 101917 / NGR234).